A 231-amino-acid polypeptide reads, in one-letter code: MLPSISLLLAAALGTSAHYTFPKVWANSGTTADWQYVRRADNWQNNGFVDNVNSQQIRCFQSTHSPAQSTLSVAAGTTITYGAAPSVYHPGPMQFYLARVPDGQDINSWTGEGAVWFKIYHEQPTFGSQLTWSSNGKSSFPVKIPSCIKSGSYLLRAEHIGLHVAQSSGAAQFYISCAQLSITGGGSTEPGANYKVSFPGAYKASDPGILININYPVPTSYKNPGPSVFTC.

Residues 1 to 17 (MLPSISLLLAAALGTSA) form the signal peptide. Cu(2+) contacts are provided by H18, D50, and H89. D50 contacts O2. Disulfide bonds link C59/C177 and C147/C231. O2-binding residues include H163 and Q172. Position 174 (Y174) interacts with Cu(2+).

The protein belongs to the polysaccharide monooxygenase AA9 family. Cu(2+) serves as cofactor.

It is found in the secreted. The enzyme catalyses [(1-&gt;4)-beta-D-glucosyl]n+m + reduced acceptor + O2 = 4-dehydro-beta-D-glucosyl-[(1-&gt;4)-beta-D-glucosyl]n-1 + [(1-&gt;4)-beta-D-glucosyl]m + acceptor + H2O.. Its function is as follows. Lytic polysaccharide monooxygenase (LPMO) that depolymerizes crystalline and amorphous polysaccharides via the oxidation of scissile alpha- or beta-(1-4)-glycosidic bonds, yielding C1 oxidation products. Catalysis by LPMOs requires the reduction of the active-site copper from Cu(II) to Cu(I) by a reducing agent and H(2)O(2) or O(2) as a cosubstrate. This is AA9 family lytic polysaccharide monooxygenase F (gh61-6) from Neurospora crassa (strain ATCC 24698 / 74-OR23-1A / CBS 708.71 / DSM 1257 / FGSC 987).